Here is a 78-residue protein sequence, read N- to C-terminus: Acyl carrier protein (78 aa).

Residues 2-77 form the Carrier domain; that stretch reads SDIAERVKKI…DAIKFLEKNA (76 aa). S37 is subject to O-(pantetheine 4'-phosphoryl)serine.

Belongs to the acyl carrier protein (ACP) family. 4'-phosphopantetheine is transferred from CoA to a specific serine of apo-ACP by AcpS. This modification is essential for activity because fatty acids are bound in thioester linkage to the sulfhydryl of the prosthetic group.

The protein resides in the cytoplasm. It functions in the pathway lipid metabolism; fatty acid biosynthesis. Carrier of the growing fatty acid chain in fatty acid biosynthesis. This is Acyl carrier protein from Azorhizobium caulinodans (strain ATCC 43989 / DSM 5975 / JCM 20966 / LMG 6465 / NBRC 14845 / NCIMB 13405 / ORS 571).